We begin with the raw amino-acid sequence, 577 residues long: Outer spore wall assembly protein SHE10 (577 aa).

Positions 1 to 23 (MGKLIKLITTLTVLVSLLQYCCE) are cleaved as a signal peptide. Coiled-coil stretches lie at residues 379-416 (NETRSTLDELTNAMEKDLSEITDEIEKKVNAIREENVE) and 513-561 (ILRS…EEDV). Over residues 525-545 (RERKERERKEREKAAAEEFQR) the composition is skewed to basic and acidic residues. Positions 525–577 (RERKERERKEREKAAAEEFQRQQELLRQQEEEDEEDVSYTSTSTITTTTTMTL) are disordered. Over residues 562 to 577 (SYTSTSTITTTTTMTL) the composition is skewed to low complexity.

It belongs to the SHE10 family. As to quaternary structure, component of the mitochondria-localized RNase mitochondrial RNA-processing (RNase MRP) composed of one single RNA encoded by the NME1 gene and at least 31 proteins. Absent in the nucleus-localized RNase MRP (NuMRP).

The protein resides in the mitochondrion. In terms of biological role, involved in spore wall assembly. May be a component of the mitochondrial RNase MRP (MtMRP), a ribonucleoprotein endoribonuclease involved in the cleaving RNA transcripts to generate primers for DNA replication in mitochondria. This is Outer spore wall assembly protein SHE10 from Saccharomyces cerevisiae (strain Lalvin EC1118 / Prise de mousse) (Baker's yeast).